Here is a 465-residue protein sequence, read N- to C-terminus: Trigger factor (465 aa).

A PPIase FKBP-type domain is found at 163–248 (GDVINFNFKG…INKIKENQPA (86 aa)). The tract at residues 431-465 (EIVNKNQNDNEIEQDKEQKDNNEEKIKQENNLENK) is disordered. Over residues 443-465 (EQDKEQKDNNEEKIKQENNLENK) the composition is skewed to basic and acidic residues.

The protein belongs to the FKBP-type PPIase family. Tig subfamily.

Its subcellular location is the cytoplasm. It catalyses the reaction [protein]-peptidylproline (omega=180) = [protein]-peptidylproline (omega=0). Functionally, involved in protein export. Acts as a chaperone by maintaining the newly synthesized protein in an open conformation. Functions as a peptidyl-prolyl cis-trans isomerase. This chain is Trigger factor, found in Mesomycoplasma hyopneumoniae (strain 232) (Mycoplasma hyopneumoniae).